A 421-amino-acid chain; its full sequence is Testin (421 aa).

A PET domain is found at 92 to 199; that stretch reads MILTNPVAAK…GDVKLPCEMD (108 aa). Positions 133–164 are disordered; sequence EKQPVAGSEGAQYRKKQLAKQLPAHDQDPSKC. Residues 155–164 show a composition bias toward basic and acidic residues; it reads PAHDQDPSKC. LIM zinc-binding domains lie at 234-297, 299-359, and 362-421; these read YSCY…CDSE, PRCA…NHAV, and QGCH…KMMS.

It belongs to the prickle / espinas / testin family. Interacts via LIM domain 1 with ZYX. Interacts (via LIM domain 3) with ENAH and VASP. Interacts with ALKBH4, talin, actin, alpha-actinin, GRIP1 and PXN. Interacts (via LIM domain 2) with ACTL7A (via N-terminus). Heterodimer with ACTL7A; the heterodimer interacts with ENAH to form a heterotrimer.

Its subcellular location is the cytoplasm. It is found in the cell junction. It localises to the focal adhesion. Functionally, scaffold protein that may play a role in cell adhesion, cell spreading and in the reorganization of the actin cytoskeleton. Plays a role in the regulation of cell proliferation. May act as a tumor suppressor. The polypeptide is Testin (TES) (Saimiri boliviensis boliviensis (Bolivian squirrel monkey)).